Consider the following 446-residue polypeptide: MANVVVIGAQWGDEGKGKITDLLSRSADVVVRYQGGVNAGHTVVVNDQTFKLHLIPSGILYPNTDCIIGSGTVIDPKVLIEELDMLDKLGVSTSHLFISESAHVTMPYHRMIDQASEERRGDHKIGTTGRGIGPTYADKSERTGIRILDLMDPEGMKKQLRWTVNYKNVILEKLYNLPHLDPEEVIAEYQVYADRLRPFVADCSLKIYDAYQQHRNILFEGAQGTLLDLDHGTYPYVTSSNPVAGGACVGTGVGPTMIDRVIGVAKAYTTRVGEGPFPTELHDEMGVALCERGAEFGTTTGRRRRCGWFDAVIGRYAVRINGLDCLAVTKLDILDEVDEIKVCVAYEIDGHESKDFPTNARQFSRCNPVYKTLPGWKQSTIHCRTLEDLPPKALDYLKFLASIVEVPIAIVSLGAERDETIIVEDPIHGPKRALLYSNGESQAMSA.

GTP-binding positions include 12–18 and 40–42; these read GDEGKGK and GHT. The Proton acceptor role is filled by aspartate 13. 2 residues coordinate Mg(2+): aspartate 13 and glycine 40. Residues 13–16, 38–41, threonine 128, arginine 142, glutamine 223, threonine 238, and arginine 302 contribute to the IMP site; these read DEGK and NAGH. The active-site Proton donor is the histidine 41. Residue 298 to 304 coordinates substrate; it reads TTTGRRR. Residues arginine 304, 330–332, and 412–414 each bind GTP; these read KLD and SLG.

The protein belongs to the adenylosuccinate synthetase family. Homodimer. Mg(2+) is required as a cofactor.

It is found in the cytoplasm. The enzyme catalyses IMP + L-aspartate + GTP = N(6)-(1,2-dicarboxyethyl)-AMP + GDP + phosphate + 2 H(+). It functions in the pathway purine metabolism; AMP biosynthesis via de novo pathway; AMP from IMP: step 1/2. Plays an important role in the de novo pathway of purine nucleotide biosynthesis. Catalyzes the first committed step in the biosynthesis of AMP from IMP. The chain is Adenylosuccinate synthetase from Acaryochloris marina (strain MBIC 11017).